Reading from the N-terminus, the 181-residue chain is Large ribosomal subunit protein uL5 (181 aa).

This sequence belongs to the universal ribosomal protein uL5 family. Part of the 50S ribosomal subunit; part of the 5S rRNA/L5/L18/L25 subcomplex. Contacts the 5S rRNA and the P site tRNA. Forms a bridge to the 30S subunit in the 70S ribosome.

This is one of the proteins that bind and probably mediate the attachment of the 5S RNA into the large ribosomal subunit, where it forms part of the central protuberance. In the 70S ribosome it contacts protein S13 of the 30S subunit (bridge B1b), connecting the 2 subunits; this bridge is implicated in subunit movement. Contacts the P site tRNA; the 5S rRNA and some of its associated proteins might help stabilize positioning of ribosome-bound tRNAs. The chain is Large ribosomal subunit protein uL5 from Acaryochloris marina (strain MBIC 11017).